Here is a 119-residue protein sequence, read N- to C-terminus: Large ribosomal subunit protein bL20 (119 aa).

This sequence belongs to the bacterial ribosomal protein bL20 family.

In terms of biological role, binds directly to 23S ribosomal RNA and is necessary for the in vitro assembly process of the 50S ribosomal subunit. It is not involved in the protein synthesizing functions of that subunit. This Xylella fastidiosa (strain 9a5c) protein is Large ribosomal subunit protein bL20.